The following is a 211-amino-acid chain: Large ribosomal subunit protein eL13 (211 aa).

Belongs to the eukaryotic ribosomal protein eL13 family. Component of the 60S large ribosomal subunit (LSU).

Its subcellular location is the cytoplasm. Component of the ribosome, a large ribonucleoprotein complex responsible for the synthesis of proteins in the cell. The small ribosomal subunit (SSU) binds messenger RNAs (mRNAs) and translates the encoded message by selecting cognate aminoacyl-transfer RNA (tRNA) molecules. The large subunit (LSU) contains the ribosomal catalytic site termed the peptidyl transferase center (PTC), which catalyzes the formation of peptide bonds, thereby polymerizing the amino acids delivered by tRNAs into a polypeptide chain. The nascent polypeptides leave the ribosome through a tunnel in the LSU and interact with protein factors that function in enzymatic processing, targeting, and the membrane insertion of nascent chains at the exit of the ribosomal tunnel. As part of the LSU, it is probably required for its formation and the maturation of rRNAs. In Ictalurus punctatus (Channel catfish), this protein is Large ribosomal subunit protein eL13 (rpl13).